We begin with the raw amino-acid sequence, 339 residues long: Ketol-acid reductoisomerase (NADP(+)) (339 aa).

A KARI N-terminal Rossmann domain is found at 1–182 (MRVYYDRDAD…GGGRAGIIET (182 aa)). Residues 24–27 (YGSQ), Arg-48, Ser-51, Thr-53, and 83–86 (DELQ) each bind NADP(+). The active site involves His-108. Gly-134 contacts NADP(+). The 146-residue stretch at 183-328 (TFREECETDL…ARLREMMPWI (146 aa)) folds into the KARI C-terminal knotted domain. Positions 191, 195, 227, and 231 each coordinate Mg(2+). Residue Ser-252 participates in substrate binding.

This sequence belongs to the ketol-acid reductoisomerase family. It depends on Mg(2+) as a cofactor.

It carries out the reaction (2R)-2,3-dihydroxy-3-methylbutanoate + NADP(+) = (2S)-2-acetolactate + NADPH + H(+). The catalysed reaction is (2R,3R)-2,3-dihydroxy-3-methylpentanoate + NADP(+) = (S)-2-ethyl-2-hydroxy-3-oxobutanoate + NADPH + H(+). Its pathway is amino-acid biosynthesis; L-isoleucine biosynthesis; L-isoleucine from 2-oxobutanoate: step 2/4. It functions in the pathway amino-acid biosynthesis; L-valine biosynthesis; L-valine from pyruvate: step 2/4. In terms of biological role, involved in the biosynthesis of branched-chain amino acids (BCAA). Catalyzes an alkyl-migration followed by a ketol-acid reduction of (S)-2-acetolactate (S2AL) to yield (R)-2,3-dihydroxy-isovalerate. In the isomerase reaction, S2AL is rearranged via a Mg-dependent methyl migration to produce 3-hydroxy-3-methyl-2-ketobutyrate (HMKB). In the reductase reaction, this 2-ketoacid undergoes a metal-dependent reduction by NADPH to yield (R)-2,3-dihydroxy-isovalerate. This Parvibaculum lavamentivorans (strain DS-1 / DSM 13023 / NCIMB 13966) protein is Ketol-acid reductoisomerase (NADP(+)).